The primary structure comprises 533 residues: Kelch-like protein 33 (533 aa).

Kelch repeat units follow at residues 210 to 258, 273 to 322, 323 to 369, 371 to 418, 419 to 465, and 467 to 514; these read ALVV…ALPA, ELYV…ALDG, KLYA…ILEG, LYVS…ALGG, RLYV…VLQG, and LLVL…ILTL.

The polypeptide is Kelch-like protein 33 (KLHL33) (Homo sapiens (Human)).